We begin with the raw amino-acid sequence, 306 residues long: MAFLEVSVQCQGRSQARYEEVLESFGALAVTLLDADADTVRERGVFEPGVGETVLWDVVVLSALFPVETDALGLLAGLEGAEPGLDWGGVRFRVVVDEDWERVWMDQFQPMRFGERTFIVPWNQAVPVEASGMDAAVVRLDPGLAFGSGTHPTTGLCLRWLDRLGGDGVLGGGEVLDFGCGSGILALAALKLGAVYAVGVDNDPQALLASRENALRNGVAERLEVYLPAEAPVRRYPVVVANILASTLVALAERLAGCVAPGGRLALSGILRGEEKEVLRCYAVWLDVLGCEEEDGWIRIDGVRRC.

4 residues coordinate S-adenosyl-L-methionine: Thr-154, Gly-179, Asp-201, and Asn-242.

This sequence belongs to the methyltransferase superfamily. PrmA family.

It is found in the cytoplasm. It carries out the reaction L-lysyl-[protein] + 3 S-adenosyl-L-methionine = N(6),N(6),N(6)-trimethyl-L-lysyl-[protein] + 3 S-adenosyl-L-homocysteine + 3 H(+). Methylates ribosomal protein L11. This chain is Ribosomal protein L11 methyltransferase, found in Xylella fastidiosa (strain 9a5c).